The following is a 385-amino-acid chain: Putative F-box protein At1g49610 (385 aa).

In terms of domain architecture, F-box spans 25 to 73 (VDSISSLPDVILQENLSLIPTKFAIRTSVLSKRWRHVWSETPSLDFDDC).

The chain is Putative F-box protein At1g49610 from Arabidopsis thaliana (Mouse-ear cress).